The primary structure comprises 115 residues: Large ribosomal subunit protein bL20 (115 aa).

This sequence belongs to the bacterial ribosomal protein bL20 family.

Functionally, binds directly to 23S ribosomal RNA and is necessary for the in vitro assembly process of the 50S ribosomal subunit. It is not involved in the protein synthesizing functions of that subunit. The protein is Large ribosomal subunit protein bL20 of Borrelia duttonii (strain Ly).